A 233-amino-acid polypeptide reads, in one-letter code: Octanoyltransferase (233 aa).

Residues Asp36–Thr211 enclose the BPL/LPL catalytic domain. Residues Arg75–His82, Ser142–Gly144, and Gly155–Ala157 each bind substrate. Cys173 (acyl-thioester intermediate) is an active-site residue.

Belongs to the LipB family.

It localises to the cytoplasm. It catalyses the reaction octanoyl-[ACP] + L-lysyl-[protein] = N(6)-octanoyl-L-lysyl-[protein] + holo-[ACP] + H(+). The protein operates within protein modification; protein lipoylation via endogenous pathway; protein N(6)-(lipoyl)lysine from octanoyl-[acyl-carrier-protein]: step 1/2. Catalyzes the transfer of endogenously produced octanoic acid from octanoyl-acyl-carrier-protein onto the lipoyl domains of lipoate-dependent enzymes. Lipoyl-ACP can also act as a substrate although octanoyl-ACP is likely to be the physiological substrate. This is Octanoyltransferase from Yersinia pseudotuberculosis serotype O:3 (strain YPIII).